We begin with the raw amino-acid sequence, 680 residues long: Protein terminal ear1 homolog (680 aa).

The 73-residue stretch at 223 to 295 folds into the RRM domain; it reads SLVVLNSLPA…RRLVVEYTRP (73 aa). 2 disordered regions span residues 294–415 and 593–680; these read RPSL…SWRG and TEPV…GYTD. Composition is skewed to low complexity over residues 328–340 and 379–403; these read PSQS…SGSG and SAAA…KQSQ. The segment covering 404-413 has biased composition (gly residues); it reads KGGGGRGGSW. Low complexity-rich tracts occupy residues 602-621 and 634-648; these read SPAP…CAAS and SSSG…SSNA. The span at 656-666 shows a compositional bias: basic and acidic residues; sequence HGETGGDRGDD.

As to expression, highly expressed in shoot apex and inflorescence apex, at intermediate levels in roots and at low levels in leaf blade and leaf sheath.

Probable RNA-binding protein. Involved in the regular timing (plastochron) of lateral organs formation. May regulate the rate of leaf initiation and the duration of vegetative phase. Seems to be redundant to the function of PLASTOCHRON1, but to act in an independent pathway. This Oryza sativa subsp. indica (Rice) protein is Protein terminal ear1 homolog (PLA2).